The following is a 427-amino-acid chain: Delta(14)-sterol reductase (427 aa).

At 1 to 25 (MSEQESRDNAAVDAVRQKYGFGFSW) the chain is on the cytoplasmic side. The chain crosses the membrane as a helical span at residues 26 to 46 (LVLMIALPPLVYYLWICVTYY). Residues 47-70 (QGELVFTSDAAAWRRFWSHVAPPT) are Periplasmic-facing. The chain crosses the membrane as a helical span at residues 71 to 91 (WHAAGLYAAWFLGQAALQVWA). Residues 92-110 (PGPTVQGMKLPDGSRLDYR) lie on the Cytoplasmic side of the membrane. A helical transmembrane segment spans residues 111–131 (MNGIFSFLFTLAVVFGLVTMG). The Periplasmic segment spans residues 132–141 (WLDATVLYDQ). Residues 142–162 (LGPLLTVVNIFTFVFAGFLYF) traverse the membrane as a helical segment. Residues 163–197 (WGLNGKQWERPTGRPFYDYFMGTALNPRIGSLDLK) are Cytoplasmic-facing. The helical transmembrane segment at 198-218 (LFCEARPGMIFWLLMNLSMAA) threads the bilayer. Residues 219–226 (KQYELHGT) are Periplasmic-facing. A helical transmembrane segment spans residues 227 to 247 (VTVPMLLVVGFQSFYLIDYFI). Residues 248 to 262 (HEEAVLTTWDIKHEK) lie on the Cytoplasmic side of the membrane. The helical transmembrane segment at 263-283 (FGWMLCWGDLVWLPFTYTLQA) threads the bilayer. Over 284–291 (QYLVHHTH) the chain is Periplasmic. The helical transmembrane segment at 292 to 312 (DLPVWGIIAIVALNLAGYAIF) threads the bilayer. The Cytoplasmic segment spans residues 313–356 (RGANIQKHHFRRDPNRIVWGKPAKYIKTKQGSLLLTSGWWGIAR). NADP(+) contacts are provided by residues Lys319, Arg323, Leu347, Trp352, and 359–360 (NY). A helical transmembrane segment spans residues 357 to 377 (HMNYFGDLMIALSWCLPAAFG). A topological domain (periplasmic) is located at residue Ser378. Residues 379–399 (PIPYFHIVYFTILLLHREKRD) traverse the membrane as a helical segment. NADP(+) is bound by residues Asp399, 403–407 (CLAKY), and Tyr414. Residues 400-427 (DAMCLAKYGEDWLQYRKKVPWRIVPKIY) lie on the Cytoplasmic side of the membrane.

The protein belongs to the ERG4/ERG24 family.

The protein resides in the cell inner membrane. The enzyme catalyses 4,4-dimethyl-5alpha-cholesta-8,24-dien-3beta-ol + NADP(+) = 4,4-dimethyl-5alpha-cholesta-8,14,24-trien-3beta-ol + NADPH + H(+). The protein operates within steroid biosynthesis; zymosterol biosynthesis; zymosterol from lanosterol. Functionally, reduces the C14=C15 double bond of 4,4-dimethyl-cholesta-8,14,24-trienol to produce 4,4-dimethyl-cholesta-8,24-dienol. Complements the deletion of the Delta(14)-sterol reductase gene ERG24 in yeast. The protein is Delta(14)-sterol reductase of Methylotuvimicrobium alcaliphilum (strain DSM 19304 / NCIMB 14124 / VKM B-2133 / 20Z) (Methylomicrobium alcaliphilum).